Here is a 452-residue protein sequence, read N- to C-terminus: Tripartite motif-containing protein 51 (452 aa).

The RING-type zinc-finger motif lies at Cys15 to Lys56. The B box-type zinc-finger motif lies at Ser88–Ile129. Zn(2+) is bound by residues Cys93, His96, Cys115, and His121. In terms of domain architecture, B30.2/SPRY spans Glu269–Phe452.

The protein belongs to the TRIM/RBCC family.

The protein is Tripartite motif-containing protein 51 (TRIM51) of Homo sapiens (Human).